The following is a 419-amino-acid chain: MGMTMTQKILAAHAGLESVKAGQLIEVNLDLVLGNDITTPVAINEFKKFGVDKVFNKSQIAIVPDHFTPNKDIKAAEQVKYVREFSNKMGIENFFEVGEMGIEHCLLPEKGLVVAGDVVIGADSHTCTYGALGAFSTGIGSTDMAAGMATGQTWFKVPSAIKFILKNKPAKWVSGKDIILHIIGMIGVDGALYKSMEFVGDGLNYLSMDDRFTMANMAIEAGGKNGIFPVDDKTVEYLKEHTKKEWEVYKADEDAEYDEVIEIELNTLRPTVSFPHLPDNTRTIDNVGDIDIDQVVIGSCTNGRISDLRIARDILKGKKVKKGIRCIVIPGTQNIYLQALEEGIIKDLIEAGVVVSTPTCGPCLGGHMGILAKGERCVSTTNRNFVGRMGHVESEVYLASPAVAAASALTGKITDPELV.

[4Fe-4S] cluster contacts are provided by C300, C360, and C363.

It belongs to the aconitase/IPM isomerase family. LeuC type 2 subfamily. In terms of assembly, heterodimer of LeuC and LeuD. Requires [4Fe-4S] cluster as cofactor.

It carries out the reaction (2R,3S)-3-isopropylmalate = (2S)-2-isopropylmalate. The protein operates within amino-acid biosynthesis; L-leucine biosynthesis; L-leucine from 3-methyl-2-oxobutanoate: step 2/4. Catalyzes the isomerization between 2-isopropylmalate and 3-isopropylmalate, via the formation of 2-isopropylmaleate. The protein is 3-isopropylmalate dehydratase large subunit of Clostridium botulinum (strain Eklund 17B / Type B).